Here is a 235-residue protein sequence, read N- to C-terminus: Thiamine import ATP-binding protein ThiQ (235 aa).

The 229-residue stretch at 2-230 folds into the ABC transporter domain; the sequence is LKLIDITWLY…QASASALLGI (229 aa). Residue 32 to 39 coordinates ATP; it reads GPSGAGKS.

The protein belongs to the ABC transporter superfamily. Thiamine importer (TC 3.A.1.19.1) family. As to quaternary structure, the complex is composed of two ATP-binding proteins (ThiQ), two transmembrane proteins (ThiP) and a solute-binding protein (ThiB).

Its subcellular location is the cell inner membrane. It catalyses the reaction thiamine(out) + ATP + H2O = thiamine(in) + ADP + phosphate + H(+). In terms of biological role, part of the ABC transporter complex ThiBPQ involved in thiamine import. Responsible for energy coupling to the transport system. Is also involved in thiamine pyrophosphate (TPP) transport. The chain is Thiamine import ATP-binding protein ThiQ from Salmonella typhimurium (strain LT2 / SGSC1412 / ATCC 700720).